Here is a 373-residue protein sequence, read N- to C-terminus: MSEILHRSLTRPVRVGNLIIGGSNEVIIQSMTTTKTHDVEATVAEIKRLEEAGCQVVRVACPDERAADALAEIKSRINIPLVVDIHFDYKLALKAIESGVDKIRINPGNIGRREKVEAVVNAAKAKGIPIRIGVNAGSLEKQFLEKYGYPTAQGMVESAMHHVKILEDLGFYNTIISLKASDVNLALEAYTLAAKTFDYPLHVGITESGPLFSGSLKSAAGLGAILSLGIGSTVRVSLSDDPVEEVKVAKEVLKSFGLAANAATLISCPTCGRIEIDLISIAKEVEEYIQNINVNIKVAVLGCAVNGPGEAREADIGIAGARNEGLLFRHGKIIRKVPEATMVEELKKEIDAIAAEKMAEREREEQELANQSN.

Residues Cys-268, Cys-271, Cys-303, and Glu-310 each coordinate [4Fe-4S] cluster.

The protein belongs to the IspG family. [4Fe-4S] cluster is required as a cofactor.

The enzyme catalyses (2E)-4-hydroxy-3-methylbut-2-enyl diphosphate + oxidized [flavodoxin] + H2O + 2 H(+) = 2-C-methyl-D-erythritol 2,4-cyclic diphosphate + reduced [flavodoxin]. It participates in isoprenoid biosynthesis; isopentenyl diphosphate biosynthesis via DXP pathway; isopentenyl diphosphate from 1-deoxy-D-xylulose 5-phosphate: step 5/6. In terms of biological role, converts 2C-methyl-D-erythritol 2,4-cyclodiphosphate (ME-2,4cPP) into 1-hydroxy-2-methyl-2-(E)-butenyl 4-diphosphate. The protein is 4-hydroxy-3-methylbut-2-en-1-yl diphosphate synthase (flavodoxin) of Exiguobacterium sp. (strain ATCC BAA-1283 / AT1b).